The sequence spans 308 residues: Bifunctional protein FolD (308 aa).

NADP(+) contacts are provided by residues 171 to 173, Ser-198, and Ile-239; that span reads GRS.

It belongs to the tetrahydrofolate dehydrogenase/cyclohydrolase family. In terms of assembly, homodimer.

The catalysed reaction is (6R)-5,10-methylene-5,6,7,8-tetrahydrofolate + NADP(+) = (6R)-5,10-methenyltetrahydrofolate + NADPH. The enzyme catalyses (6R)-5,10-methenyltetrahydrofolate + H2O = (6R)-10-formyltetrahydrofolate + H(+). It participates in one-carbon metabolism; tetrahydrofolate interconversion. Functionally, catalyzes the oxidation of 5,10-methylenetetrahydrofolate to 5,10-methenyltetrahydrofolate and then the hydrolysis of 5,10-methenyltetrahydrofolate to 10-formyltetrahydrofolate. This Borreliella burgdorferi (strain ZS7) (Borrelia burgdorferi) protein is Bifunctional protein FolD.